The primary structure comprises 218 residues: Guanylate kinase (218 aa).

The Guanylate kinase-like domain occupies 10–190 (GLLIILSSPS…TEERLKTIIT (181 aa)). Residue 17 to 24 (SPSGAGKS) coordinates ATP.

The protein belongs to the guanylate kinase family.

Its subcellular location is the cytoplasm. It catalyses the reaction GMP + ATP = GDP + ADP. Essential for recycling GMP and indirectly, cGMP. The chain is Guanylate kinase from Jannaschia sp. (strain CCS1).